The primary structure comprises 145 residues: Large ribosomal subunit protein uL13 (145 aa).

This sequence belongs to the universal ribosomal protein uL13 family. Part of the 50S ribosomal subunit.

This protein is one of the early assembly proteins of the 50S ribosomal subunit, although it is not seen to bind rRNA by itself. It is important during the early stages of 50S assembly. The sequence is that of Large ribosomal subunit protein uL13 from Haloquadratum walsbyi (strain DSM 16790 / HBSQ001).